The sequence spans 375 residues: MDVTSQARGVGLEMYPGTAQPAAPNTTSPELNLSHPLLGTALANGTGELSEHQQYVIGLFLSCLYTIFLFPIGFVGNILILVVNISFREKMTIPDLYFINLAVADLILVADSLIEVFNLHERYYDIAVLCTFMSLFLQVNMYSSVFFLTWMSFDRYIALARAMRCSLFRTKHHARLSCGLIWMASVSATLVPFTAVHLQHTDEACFCFADVREVQWLEVTLGFIVPFAIIGLCYSLIVRVLVRAHRHRGLRPRRQKALRMILAVVLVFFVCWLPENVFISVHLLQRTQPGAAPCKQSFRHAHPLTGHIVNLAAFSNSCLNPLIYSFLGETFRDKLRLYIEQKTNLPALNRFCHAALKAVIPDSTEQSDVRFSSAV.

Met-1 is subject to N-acetylmethionine. The Extracellular portion of the chain corresponds to Met-1–Ser-62. N-linked (GlcNAc...) asparagine glycans are attached at residues Asn-25, Asn-32, and Asn-44. A helical transmembrane segment spans residues Cys-63–Asn-84. Residues Ile-85–Leu-96 lie on the Cytoplasmic side of the membrane. Residues Tyr-97–His-120 form a helical membrane-spanning segment. Topologically, residues Glu-121–Phe-132 are extracellular. Cys-130 and Cys-207 are oxidised to a cystine. A helical membrane pass occupies residues Met-133–Phe-153. The Cytoplasmic segment spans residues Asp-154–Arg-175. Residues Leu-176 to Thr-194 form a helical membrane-spanning segment. At Ala-195–Thr-220 the chain is on the extracellular side. A helical transmembrane segment spans residues Leu-221–Leu-236. The Cytoplasmic segment spans residues Ile-237 to Arg-259. A helical transmembrane segment spans residues Met-260–Ser-280. The Extracellular portion of the chain corresponds to Val-281 to Gly-306. A helical membrane pass occupies residues His-307 to Leu-327. Residues Gly-328–Val-375 lie on the Cytoplasmic side of the membrane.

This sequence belongs to the G-protein coupled receptor 1 family. In terms of assembly, homodimer. Heterodimer; heterodimerizes with other G-protein-coupled receptor (GPCRs) like CRHR1, HTR1A and PAQR8. Interacts (via C-terminus tail motif) with DLG4 (via N-terminus tandem pair of PDZ domains); the interaction is direct and induces the increase of GPER1 protein levels residing at the plasma membrane surface in a estradiol-independent manner. Interacts with RAMP3; the interaction confers proper subcellular localization and function in cardioprotection. Interacts with KRT7 and KRT8. Interacts with EGFR; the interaction increases after agonist-induced stimulation in cancer-associated fibroblasts (CAF). Interacts with EGFR and ESR1. In terms of processing, ubiquitinated; ubiquitination occurs at the plasma membrane and leads to proteasome-mediated degradation. Glycosylated. In terms of tissue distribution, expressed in placenta, endothelial and epithelial cells, non laboring and laboring term myometrium, fibroblasts and cancer-associated fibroblasts (CAF), prostate cancer cells and invasive adenocarcinoma (at protein level). Ubiquitously expressed, but is most abundant in placenta. In brain regions, expressed as a 2.8 kb transcript in basal forebrain, frontal cortex, thalamus, hippocampus, caudate and putamen.

Its subcellular location is the nucleus. The protein resides in the cytoplasm. The protein localises to the perinuclear region. It is found in the cytoskeleton. It localises to the cell membrane. Its subcellular location is the basolateral cell membrane. The protein resides in the cytoplasmic vesicle membrane. The protein localises to the early endosome. It is found in the recycling endosome. It localises to the golgi apparatus membrane. Its subcellular location is the golgi apparatus. The protein resides in the trans-Golgi network. The protein localises to the endoplasmic reticulum membrane. It is found in the cell projection. It localises to the dendrite. Its subcellular location is the dendritic spine membrane. The protein resides in the axon. The protein localises to the postsynaptic density. It is found in the mitochondrion membrane. In terms of biological role, G-protein coupled estrogen receptor that binds to 17-beta-estradiol (E2) with high affinity, leading to rapid and transient activation of numerous intracellular signaling pathways. Stimulates cAMP production, calcium mobilization and tyrosine kinase Src inducing the release of heparin-bound epidermal growth factor (HB-EGF) and subsequent transactivation of the epidermal growth factor receptor (EGFR), activating downstream signaling pathways such as PI3K/Akt and ERK/MAPK. Mediates pleiotropic functions among others in the cardiovascular, endocrine, reproductive, immune and central nervous systems. Has a role in cardioprotection by reducing cardiac hypertrophy and perivascular fibrosis in a RAMP3-dependent manner. Regulates arterial blood pressure by stimulating vasodilation and reducing vascular smooth muscle and microvascular endothelial cell proliferation. Plays a role in blood glucose homeostasis contributing to the insulin secretion response by pancreatic beta cells. Triggers mitochondrial apoptosis during pachytene spermatocyte differentiation. Stimulates uterine epithelial cell proliferation. Enhances uterine contractility in response to oxytocin. Contributes to thymic atrophy by inducing apoptosis. Attenuates TNF-mediated endothelial expression of leukocyte adhesion molecules. Promotes neuritogenesis in developing hippocampal neurons. Plays a role in acute neuroprotection against NMDA-induced excitotoxic neuronal death. Increases firing activity and intracellular calcium oscillations in luteinizing hormone-releasing hormone (LHRH) neurons. Inhibits early osteoblast proliferation at growth plate during skeletal development. Inhibits mature adipocyte differentiation and lipid accumulation. Involved in the recruitment of beta-arrestin 2 ARRB2 at the plasma membrane in epithelial cells. Also functions as a receptor for aldosterone mediating rapid regulation of vascular contractibility through the PI3K/ERK signaling pathway. Involved in cancer progression regulation. Stimulates cancer-associated fibroblast (CAF) proliferation by a rapid genomic response through the EGFR/ERK transduction pathway. Associated with EGFR, may act as a transcription factor activating growth regulatory genes (c-fos, cyclin D1). Promotes integrin alpha-5/beta-1 and fibronectin (FN) matrix assembly in breast cancer cells. This is G-protein coupled estrogen receptor 1 from Homo sapiens (Human).